Reading from the N-terminus, the 445-residue chain is Probable fructoselysine/psicoselysine transporter FrlA (445 aa).

A run of 11 helical transmembrane segments spans residues 10 to 32, 39 to 61, 97 to 119, 126 to 143, 153 to 175, 188 to 210, 230 to 252, 272 to 294, 341 to 363, 384 to 406, and 411 to 433; these read LGFW…FVSV, AGTP…PQMC, FWAN…LGFL, LGKF…LLHL, QTLI…IFWF, IGAT…SYTG, RALI…VISG, WIPA…VILG, GIFF…VMCF, LWRT…ILVA, and WAPI…AYAF.

It belongs to the amino acid-polyamine-organocation (APC) superfamily.

It localises to the cell inner membrane. The enzyme catalyses N(6)-(D-fructosyl)-L-lysine(in) = N(6)-(D-fructosyl)-L-lysine(out). It carries out the reaction N(6)-(D-psicosyl)-L-lysine(in) = N(6)-(D-psicosyl)-L-lysine(out). The protein operates within carbohydrate metabolism; fructoselysine degradation. Functionally, is likely involved in the transport of fructoselysine and psicoselysine to the cytoplasm, where they are degraded. In Escherichia coli O157:H7, this protein is Probable fructoselysine/psicoselysine transporter FrlA (frlA).